We begin with the raw amino-acid sequence, 155 residues long: MVILGIDPGLARVGYGLIEVNNQRQVKMLDCGIIKTNKNQYEGERMVEIAKDLRVLIRKWKPGLAAVEKFFFYKSSTTISVVQARGVLIMTLARFKVPIVEFPPMQIKLAVAGSGHAKKDEVLEAVMRELRLKVPPRPDDAADALAIALTGLFQQ.

Active-site residues include D7, E68, and D140. Mg(2+) is bound by residues D7, E68, and D140.

This sequence belongs to the RuvC family. Homodimer which binds Holliday junction (HJ) DNA. The HJ becomes 2-fold symmetrical on binding to RuvC with unstacked arms; it has a different conformation from HJ DNA in complex with RuvA. In the full resolvosome a probable DNA-RuvA(4)-RuvB(12)-RuvC(2) complex forms which resolves the HJ. Requires Mg(2+) as cofactor.

It localises to the cytoplasm. The catalysed reaction is Endonucleolytic cleavage at a junction such as a reciprocal single-stranded crossover between two homologous DNA duplexes (Holliday junction).. In terms of biological role, the RuvA-RuvB-RuvC complex processes Holliday junction (HJ) DNA during genetic recombination and DNA repair. Endonuclease that resolves HJ intermediates. Cleaves cruciform DNA by making single-stranded nicks across the HJ at symmetrical positions within the homologous arms, yielding a 5'-phosphate and a 3'-hydroxyl group; requires a central core of homology in the junction. The consensus cleavage sequence is 5'-(A/T)TT(C/G)-3'. Cleavage occurs on the 3'-side of the TT dinucleotide at the point of strand exchange. HJ branch migration catalyzed by RuvA-RuvB allows RuvC to scan DNA until it finds its consensus sequence, where it cleaves and resolves the cruciform DNA. This Prochlorococcus marinus (strain SARG / CCMP1375 / SS120) protein is Crossover junction endodeoxyribonuclease RuvC.